The sequence spans 377 residues: Erythronate-4-phosphate dehydrogenase (377 aa).

Positions 45 and 67 each coordinate substrate. NAD(+) is bound by residues 127–128, Asp-147, and Thr-176; that span reads QV. Arg-209 is a catalytic residue. Position 233 (Asp-233) interacts with NAD(+). Glu-238 is an active-site residue. The Proton donor role is filled by His-255. Gly-258 contacts NAD(+). Tyr-259 is a substrate binding site.

It belongs to the D-isomer specific 2-hydroxyacid dehydrogenase family. PdxB subfamily. As to quaternary structure, homodimer.

It localises to the cytoplasm. It carries out the reaction 4-phospho-D-erythronate + NAD(+) = (R)-3-hydroxy-2-oxo-4-phosphooxybutanoate + NADH + H(+). It functions in the pathway cofactor biosynthesis; pyridoxine 5'-phosphate biosynthesis; pyridoxine 5'-phosphate from D-erythrose 4-phosphate: step 2/5. In terms of biological role, catalyzes the oxidation of erythronate-4-phosphate to 3-hydroxy-2-oxo-4-phosphonooxybutanoate. The chain is Erythronate-4-phosphate dehydrogenase from Vibrio vulnificus (strain CMCP6).